Consider the following 452-residue polypeptide: Probable splicing factor, arginine/serine-rich 7 (452 aa).

2 consecutive RRM domains span residues 10 to 91 and 163 to 240; these read KILH…YPNP and RTVY…HSRV. The segment at 258 to 452 is disordered; sequence EEAIRMGRNG…GNGDVVMASE (195 aa). Residues 259 to 272 are compositionally biased toward basic and acidic residues; sequence EAIRMGRNGDDRDR. Basic residues predominate over residues 273–290; sequence RRSRSPRRRRSPSPRRRR. The span at 291–305 shows a compositional bias: basic and acidic residues; it reads DSRDRDRDRDRDRRR. 3 stretches are compositionally biased toward basic residues: residues 323-335, 345-360, and 370-382; these read KRSR…RRSR, KRSR…KSRD, and SKDR…RSRS. Over residues 383–421 the composition is skewed to basic and acidic residues; that stretch reads RSPEKRRDKEDRKTEKKENENESSLREKLLEKKAARKDS.

It belongs to the splicing factor SR family. Post-translationally, extensively phosphorylated on serine residues in the RS domain.

It localises to the nucleus. The chain is Probable splicing factor, arginine/serine-rich 7 (rsp-7) from Caenorhabditis elegans.